A 425-amino-acid chain; its full sequence is L-cysteine:1D-myo-inositol 2-amino-2-deoxy-alpha-D-glucopyranoside ligase (425 aa).

Cys43 serves as a coordination point for Zn(2+). L-cysteinyl-5'-AMP contacts are provided by residues 43–46 (CGIT), Thr58, and 81–83 (NVT). Positions 45–55 (ITPYDATHIGH) match the 'HIGH' region motif. Residues 195 to 200 (ERGGDP) carry the 'ERGGDP' region motif. Residue Trp236 participates in L-cysteinyl-5'-AMP binding. Cys240 contributes to the Zn(2+) binding site. 258–260 (GSD) provides a ligand contact to L-cysteinyl-5'-AMP. His265 is a binding site for Zn(2+). L-cysteinyl-5'-AMP is bound at residue Val295. Positions 301–305 (KMSKS) match the 'KMSKS' region motif.

Belongs to the class-I aminoacyl-tRNA synthetase family. MshC subfamily. Monomer. The cofactor is Zn(2+).

It catalyses the reaction 1D-myo-inositol 2-amino-2-deoxy-alpha-D-glucopyranoside + L-cysteine + ATP = 1D-myo-inositol 2-(L-cysteinylamino)-2-deoxy-alpha-D-glucopyranoside + AMP + diphosphate + H(+). In terms of biological role, catalyzes the ATP-dependent condensation of GlcN-Ins and L-cysteine to form L-Cys-GlcN-Ins. This Sanguibacter keddieii (strain ATCC 51767 / DSM 10542 / NCFB 3025 / ST-74) protein is L-cysteine:1D-myo-inositol 2-amino-2-deoxy-alpha-D-glucopyranoside ligase.